Here is a 439-residue protein sequence, read N- to C-terminus: Glutamate--tRNA ligase 2 (439 aa).

Positions 6–16 (PSPTGDMHIGN) match the 'HIGH' region motif. Positions 232–236 (KMSKR) match the 'KMSKS' region motif. Lysine 235 is an ATP binding site.

It belongs to the class-I aminoacyl-tRNA synthetase family. Glutamate--tRNA ligase type 1 subfamily. Monomer.

It is found in the cytoplasm. It carries out the reaction tRNA(Glu) + L-glutamate + ATP = L-glutamyl-tRNA(Glu) + AMP + diphosphate. Its function is as follows. Catalyzes the attachment of glutamate to tRNA(Glu) in a two-step reaction: glutamate is first activated by ATP to form Glu-AMP and then transferred to the acceptor end of tRNA(Glu). This chain is Glutamate--tRNA ligase 2, found in Helicobacter pylori (strain Shi470).